A 271-amino-acid chain; its full sequence is Colicin-M (271 aa).

The TonB box signature appears at 2 to 9 (ETLTVHAP).

In terms of biological role, colicins are polypeptide toxins produced by and active against E.coli and closely related bacteria. Its function is as follows. This is a calcium-requiring inhibitor for murein biosynthesis; it causes lysis of sensitive cells accompanied by murein degradation. The target site is possibly the cytoplasmic membrane. The chain is Colicin-M (cma) from Escherichia coli.